The primary structure comprises 65 residues: Sarcoplasmic/endoplasmic reticulum calcium ATPase regulator ARLN (65 aa).

M1 bears the N-acetylmethionine mark. A disordered region spans residues 1-36 (MEVSQAASGTDGVRERRGSFEAGRRNQDEAPQSGMN). A compositionally biased stretch (basic and acidic residues) spans 12–28 (GVRERRGSFEAGRRNQD). S19 bears the Phosphoserine mark. A helical transmembrane segment spans residues 44–64 (WLDLWLFILFDLALFVFVYLL).

In terms of assembly, homooligomer. Can also form heterooligomers with other sarcoplasmic/endoplasmic reticulum calcium ATPase (SERCA) regulators ERLN, PLN, SLN and STRIT1/DWORF. Monomer. Interacts as a monomer with ATP2A2/SERCA2; the interaction results in inhibition of ATP2A2 Ca(2+) affinity. As to expression, in the embryo, expressed in heart, epidermal epithelium, salivary gland, brown fat, intestinal epithelium and bladder urothelium.

It localises to the endoplasmic reticulum membrane. Functionally, inhibits the activity of the calcium ATPases ATP2A2/SERCA2 and ATP2A3/SERCA3 by decreasing their apparent affinity for Ca(2+). In Mus musculus (Mouse), this protein is Sarcoplasmic/endoplasmic reticulum calcium ATPase regulator ARLN (Arln).